Consider the following 313-residue polypeptide: Porphobilinogen deaminase (313 aa).

S-(dipyrrolylmethanemethyl)cysteine is present on cysteine 242.

It belongs to the HMBS family. As to quaternary structure, monomer. Requires dipyrromethane as cofactor.

It catalyses the reaction 4 porphobilinogen + H2O = hydroxymethylbilane + 4 NH4(+). The protein operates within porphyrin-containing compound metabolism; protoporphyrin-IX biosynthesis; coproporphyrinogen-III from 5-aminolevulinate: step 2/4. Functionally, tetrapolymerization of the monopyrrole PBG into the hydroxymethylbilane pre-uroporphyrinogen in several discrete steps. The chain is Porphobilinogen deaminase from Pseudomonas aeruginosa (strain LESB58).